Here is an 893-residue protein sequence, read N- to C-terminus: DNA mismatch repair protein MutS (893 aa).

Low complexity predominate over residues 1-17; the sequence is MESTMSSASTNASPPSA. Positions 1–22 are disordered; it reads MESTMSSASTNASPPSASEKHT. Residue 641–648 participates in ATP binding; it reads GPNMGGKS.

This sequence belongs to the DNA mismatch repair MutS family.

Functionally, this protein is involved in the repair of mismatches in DNA. It is possible that it carries out the mismatch recognition step. This protein has a weak ATPase activity. The polypeptide is DNA mismatch repair protein MutS (Herminiimonas arsenicoxydans).